Reading from the N-terminus, the 526-residue chain is Peptide chain release factor 3 (526 aa).

One can recognise a tr-type G domain in the interval 8-277; it reads NKRRTFAIIS…GLTQWAPAPQ (270 aa). GTP-binding positions include 17 to 24, 85 to 89, and 139 to 142; these read SHPDAGKT, DTPGH, and NKLD.

Belongs to the TRAFAC class translation factor GTPase superfamily. Classic translation factor GTPase family. PrfC subfamily.

It is found in the cytoplasm. Functionally, increases the formation of ribosomal termination complexes and stimulates activities of RF-1 and RF-2. It binds guanine nucleotides and has strong preference for UGA stop codons. It may interact directly with the ribosome. The stimulation of RF-1 and RF-2 is significantly reduced by GTP and GDP, but not by GMP. The sequence is that of Peptide chain release factor 3 from Histophilus somni (strain 2336) (Haemophilus somnus).